Reading from the N-terminus, the 205-residue chain is Inactive ribonuclease-like protein 9 (205 aa).

An N-terminal signal peptide occupies residues 1-26 (MMRTLITIHPLPLLLLLQQLLQPVQF). Intrachain disulfides connect Cys-98–Cys-153, Cys-116–Cys-168, and Cys-123–Cys-130. Residues Asn-131 and Asn-143 are each glycosylated (N-linked (GlcNAc...) asparagine).

This sequence belongs to the pancreatic ribonuclease family.

Its subcellular location is the secreted. Its function is as follows. Does not exhibit any ribonuclease activity. This chain is Inactive ribonuclease-like protein 9 (RNASE9), found in Gorilla gorilla gorilla (Western lowland gorilla).